The primary structure comprises 35 residues: Cupiennin-1d (35 aa).

The residue at position 35 (glutamate 35) is a Glutamic acid 1-amide.

Belongs to the cationic peptide 04 (cupiennin) family. 01 subfamily. As to expression, expressed by the venom gland.

The protein localises to the secreted. In terms of biological role, has antimicrobial activity against B.subtilis, E.coli, E.faecalis, P.aeruginosa, and S.aureus. Has insecticidal and hemolytic activities. Probably acts by disturbing membrane function with its amphipathic structure. The protein is Cupiennin-1d of Cupiennius salei (American wandering spider).